A 206-amino-acid chain; its full sequence is Holliday junction branch migration complex subunit RuvA (206 aa).

The segment at 1–64 (MIGKLKGVLD…EDMIRLYGFR (64 aa)) is domain I. The interval 65–144 (TVLEREWFRL…AFAGEAAGAI (80 aa)) is domain II. Residues 145 to 154 (GLKQDLGEGV) are flexible linker. A domain III region spans residues 154–206 (VAPAPVSDAVSALANLGYSRDIAANAVAAALKSAGEGADTGTLIRLGLKELAR).

The protein belongs to the RuvA family. In terms of assembly, homotetramer. Forms an RuvA(8)-RuvB(12)-Holliday junction (HJ) complex. HJ DNA is sandwiched between 2 RuvA tetramers; dsDNA enters through RuvA and exits via RuvB. An RuvB hexamer assembles on each DNA strand where it exits the tetramer. Each RuvB hexamer is contacted by two RuvA subunits (via domain III) on 2 adjacent RuvB subunits; this complex drives branch migration. In the full resolvosome a probable DNA-RuvA(4)-RuvB(12)-RuvC(2) complex forms which resolves the HJ.

Its subcellular location is the cytoplasm. Functionally, the RuvA-RuvB-RuvC complex processes Holliday junction (HJ) DNA during genetic recombination and DNA repair, while the RuvA-RuvB complex plays an important role in the rescue of blocked DNA replication forks via replication fork reversal (RFR). RuvA specifically binds to HJ cruciform DNA, conferring on it an open structure. The RuvB hexamer acts as an ATP-dependent pump, pulling dsDNA into and through the RuvAB complex. HJ branch migration allows RuvC to scan DNA until it finds its consensus sequence, where it cleaves and resolves the cruciform DNA. This chain is Holliday junction branch migration complex subunit RuvA, found in Chelativorans sp. (strain BNC1).